Here is a 106-residue protein sequence, read N- to C-terminus: Follitropin subunit beta (106 aa).

6 cysteine pairs are disulfide-bonded: C1/C49, C15/C64, C18/C102, C26/C80, C30/C82, and C85/C92. N-linked (GlcNAc...) asparagine glycans are attached at residues N5 and N22.

It belongs to the glycoprotein hormones subunit beta family. In terms of assembly, heterodimer. The active follitropin is a heterodimer composed of an alpha chain/CGA shared with other hormones and a unique beta chain/FSHB shown here.

It localises to the secreted. Its function is as follows. Together with the alpha chain CGA constitutes follitropin, the follicle-stimulating hormone, and provides its biological specificity to the hormone heterodimer. Binds FSHR, a G protein-coupled receptor, on target cells to activate downstream signaling pathways. Follitropin is involved in follicle development and spermatogenesis in reproductive organs. The chain is Follitropin subunit beta (FSHB) from Struthio camelus (Common ostrich).